We begin with the raw amino-acid sequence, 183 residues long: Alkyl hydroperoxide reductase AhpD (183 aa).

The active-site Proton donor is C132. A disulfide bridge links C132 with C135. C135 functions as the Cysteine sulfenic acid (-SOH) intermediate in the catalytic mechanism.

The protein belongs to the AhpD family.

It carries out the reaction N(6)-[(R)-dihydrolipoyl]-L-lysyl-[lipoyl-carrier protein] + a hydroperoxide = N(6)-[(R)-lipoyl]-L-lysyl-[lipoyl-carrier protein] + an alcohol + H2O. Its function is as follows. Antioxidant protein with alkyl hydroperoxidase activity. Required for the reduction of the AhpC active site cysteine residues and for the regeneration of the AhpC enzyme activity. This chain is Alkyl hydroperoxide reductase AhpD, found in Acidobacterium capsulatum (strain ATCC 51196 / DSM 11244 / BCRC 80197 / JCM 7670 / NBRC 15755 / NCIMB 13165 / 161).